A 282-amino-acid polypeptide reads, in one-letter code: MATVTAALVKELRERTAAGMMECKKALVEAEGDIELAIENMRKSGAAKAAKKAGNIAAEGTIIIKEEAGVAVLLEVNCQTDFVAKDSGFLGFANEVAEVALAERLNDIVALQAKFEDARIALVTKIGENISIRRVQLVEGVALASYRHGEKIGVVIAGEGDAETLKHIAMHVAASKPEYVNPSDVPADVVEKEKAVQVEIAMNEGKPQEIAEKMVIGRMKKFTGEVSLTGQAFIMEPKKTVADILKEKGASVSNFVRLEVGEGIEKAAEMSFADEVAAVQKG.

An involved in Mg(2+) ion dislocation from EF-Tu region spans residues 80–83; sequence TDFV.

Belongs to the EF-Ts family.

The protein localises to the cytoplasm. Associates with the EF-Tu.GDP complex and induces the exchange of GDP to GTP. It remains bound to the aminoacyl-tRNA.EF-Tu.GTP complex up to the GTP hydrolysis stage on the ribosome. This is Elongation factor Ts from Aliivibrio salmonicida (strain LFI1238) (Vibrio salmonicida (strain LFI1238)).